The primary structure comprises 951 residues: PE-PGRS family protein PE_PGRS3 (951 aa).

Positions Val4–Ala94 constitute a PE domain. Positions Cys887–Ala919 are enriched in basic residues. A disordered region spans residues Cys887–Pro951.

This sequence belongs to the mycobacterial PE family. PGRS subfamily.

The protein localises to the cell outer membrane. It is found in the secreted. The protein resides in the cell wall. It localises to the cell surface. Its function is as follows. The arginine-rich C-terminal region protrudes from the mycobacterial membrane and mediates M.tuberculosis entry into host epithelial cells. May serve as a bridge between mycobacteria and host cells by interacting with specific host phospholipids and extracting them from host cells, for their direct integration or as a source of phosphate, during phases of TB pathogenesis when M.tuberculosis is short of phosphate supply. The polypeptide is PE-PGRS family protein PE_PGRS3 (PE_PGRS3) (Mycobacterium tuberculosis (strain CDC 1551 / Oshkosh)).